Reading from the N-terminus, the 369-residue chain is Probable dual-specificity RNA methyltransferase RlmN (369 aa).

The active-site Proton acceptor is E108. In terms of domain architecture, Radical SAM core spans 114 to 351; that stretch reads YPDRATLCIS…IAQGVSCTVR (238 aa). C121 and C362 are oxidised to a cystine. C128, C132, and C135 together coordinate [4Fe-4S] cluster. S-adenosyl-L-methionine-binding positions include 183–184, S217, 240–242, and N319; these read GE and SLH. Residue C362 is the S-methylcysteine intermediate of the active site.

The protein belongs to the radical SAM superfamily. RlmN family. Requires [4Fe-4S] cluster as cofactor.

It localises to the cytoplasm. It carries out the reaction adenosine(2503) in 23S rRNA + 2 reduced [2Fe-2S]-[ferredoxin] + 2 S-adenosyl-L-methionine = 2-methyladenosine(2503) in 23S rRNA + 5'-deoxyadenosine + L-methionine + 2 oxidized [2Fe-2S]-[ferredoxin] + S-adenosyl-L-homocysteine. The enzyme catalyses adenosine(37) in tRNA + 2 reduced [2Fe-2S]-[ferredoxin] + 2 S-adenosyl-L-methionine = 2-methyladenosine(37) in tRNA + 5'-deoxyadenosine + L-methionine + 2 oxidized [2Fe-2S]-[ferredoxin] + S-adenosyl-L-homocysteine. In terms of biological role, specifically methylates position 2 of adenine 2503 in 23S rRNA and position 2 of adenine 37 in tRNAs. The chain is Probable dual-specificity RNA methyltransferase RlmN from Rhodococcus erythropolis (strain PR4 / NBRC 100887).